The following is a 100-amino-acid chain: Bombyxin A-2 homolog (100 aa).

An N-terminal signal peptide occupies residues 1–18 (MRTQVLFLIVVLAVMASG). Cystine bridges form between Cys26–Cys85, Cys38–Cys98, and Cys84–Cys89. A propeptide spans 47 to 75 (PPYISSENEGYGWKWLERQRARQLDEARG) (c peptide like).

The protein belongs to the insulin family. Heterodimer of a B chain and an A chain linked by two disulfide bonds.

Its subcellular location is the secreted. In terms of biological role, brain peptide responsible for activation of prothoracic glands to produce ecdysone in insects. The chain is Bombyxin A-2 homolog (SBXA2) from Samia cynthia (Ailanthus silkmoth).